A 479-amino-acid polypeptide reads, in one-letter code: Protein pleiotropic regulator PRL2 (479 aa).

WD repeat units follow at residues 168–198 (GHLG…KIWD), 210–240 (GHIG…KCWD), 252–282 (GHLH…RVWD), 293–323 (PHDS…KFWD), 335–364 (NHKK…KKFS), 377–406 (LQRD…WFWD), and 426–456 (ESEA…KMWK). Short sequence motifs (DWD box) lie at residues 269-284 (VLTG…WDIR) and 310-325 (VITG…WDLR). The tract at residues 458–479 (DEDATPETHPLNFKPPKEIRRF) is disordered.

The protein belongs to the WD repeat PRL1/PRL2 family.

Its function is as follows. Pleiotropic regulator. The sequence is that of Protein pleiotropic regulator PRL2 (PRL2) from Arabidopsis thaliana (Mouse-ear cress).